The chain runs to 1668 residues: Kinesin-like protein KIF21B (1668 aa).

Residues 8 to 371 (CVKVAVRIRP…LKYANRARNI (364 aa)) enclose the Kinesin motor domain. An ATP-binding site is contributed by 87 to 94 (GQTGAGKT). The stretch at 372–465 (KNKVVVNQDK…LMSQEANLLL (94 aa)) forms a coiled coil. An interaction with TRIM3 region spans residues 401–1100 (MEYKAGKRVI…LQALIYNVQH (700 aa)). 2 disordered regions span residues 553 to 629 (KKKE…PEEK) and 837 to 866 (RVGL…GARS). Acidic residues predominate over residues 579 to 628 (NSEETDENEAEEEEEERDESGCEEEEGREDEDEDSGSEESLVDSDSDPEE). Serine 580 carries the phosphoserine modification. Residue threonine 583 is modified to Phosphothreonine. Low complexity predominate over residues 847 to 866 (SGAEVSASTTSSEAESGARS). Positions 924–1019 (IIDIVMQRMT…TKEELDSTDT (96 aa)) form a coiled coil. A phosphoserine mark is found at serine 1150, serine 1168, and serine 1217. Residues 1199–1219 (LPTRGSTFPRQSRGATDTSPL) show a composition bias toward polar residues. The segment at 1199–1253 (LPTRGSTFPRQSRGATDTSPLTRRKSYDRGQPIRSTDMGFTPPSSPPTRPRNDRN) is disordered. A Phosphothreonine modification is found at threonine 1239. At serine 1243 the chain carries Phosphoserine. WD repeat units lie at residues 1308-1345 (GHTK…EIAA), 1348-1386 (GHPN…KCIR), 1412-1450 (QGEH…PIGK), 1453-1495 (GHIG…TGTI), 1504-1541 (PHYD…LIQQ), 1545-1584 (AHKD…PIGE), and 1587-1624 (GHDS…TPCL).

This sequence belongs to the TRAFAC class myosin-kinesin ATPase superfamily. Kinesin family. In terms of assembly, interacts with TRIM3; the interaction positively affects motility of KIF21B. Interacts with GABARAP and GABA(A) receptor subunits: GABRG2, GABRA1 and GABRA2. May interact with GABA(A) receptor subunits: GABRB2 and GABRB3. Expressed in brain (at protein level). Expressed in spleen and at lower levels in testes.

The protein resides in the cytoplasm. It localises to the cytoskeleton. The protein localises to the cell projection. Its subcellular location is the dendrite. It is found in the growth cone. The protein resides in the axon. It localises to the cytoplasmic vesicle. Plus-end directed microtubule-dependent motor protein which displays processive activity. Is involved in regulation of microtubule dynamics, synapse function and neuronal morphology, including dendritic tree branching and spine formation. Plays a role in lerning and memory. Involved in delivery of gamma-aminobutyric acid (GABA(A)) receptor to cell surface. This Mus musculus (Mouse) protein is Kinesin-like protein KIF21B (Kif21b).